Here is a 403-residue protein sequence, read N- to C-terminus: MAHAMENSWTISKEYHIDEEVGFALPNPQENLPDFYNDWMFIAKHLPDLIESGQLRERVEKLNMLSIDHLTDHKSQRLARLVLGCITMAYVWGKGHGDVRKVLPRNIAVPYCQLSKKLELPPILVYADCVLANWKKKDPNKPLTYENMDVLFSFRDGDCSKGFFLVSLLVEIAAASAIKVIPTVFKAMQMQERDTLLKALLEIASCLEKALQVFHQIHDHVNPKAFFSVLRIYLSGWKGNPQLSDGLVYEGFWEDPKEFAGGSAGQSSVFQCFDVLLGIQQTAGGGHAAQFLQDMRRYMPPAHRNFLCSLESNPSVREFVLSKGDAGLREAYDACVKALVSLRSYHLQIVTKYILIPASQQPKENKTSEDPSKLEAKGTGGTDLMNFLKTVRSTTEKSLLKEG.

A heme b-binding site is contributed by His346. A disordered region spans residues 360–381; that stretch reads QQPKENKTSEDPSKLEAKGTGG. Over residues 363-376 the composition is skewed to basic and acidic residues; it reads KENKTSEDPSKLEA.

It belongs to the indoleamine 2,3-dioxygenase family. As to quaternary structure, monomer. It depends on heme b as a cofactor. Expressed in mature dendritic cells located in lymphoid organs (including lymph nodes, spleen, tonsils, Peyers's patches, the gut lamina propria, and the thymic medulla), in some epithelial cells of the female genital tract, as well as in endothelial cells of term placenta and in lung parenchyma. Weakly or not expressed in most normal tissues, but mostly inducible in most tissues. Expressed in more than 50% of tumors, either by tumoral, stromal, or endothelial cells (expression in tumor is associated with a worse clinical outcome). Not overexpressed in tumor-draining lymph nodes.

It is found in the cytoplasm. The protein localises to the cytosol. It carries out the reaction D-tryptophan + O2 = N-formyl-D-kynurenine. The enzyme catalyses L-tryptophan + O2 = N-formyl-L-kynurenine. Its pathway is amino-acid degradation; L-tryptophan degradation via kynurenine pathway; L-kynurenine from L-tryptophan: step 1/2. With respect to regulation, activity is inhibited by and MTH-trp (methylthiohydantoin-DL-tryptophan), modestly inhibited by L-1MT (1-methyl-L-tryptophan) but not D-1MT (1-methyl-D-tryptophan). In terms of biological role, catalyzes the first and rate limiting step of the catabolism of the essential amino acid tryptophan along the kynurenine pathway. Involved in the peripheral immune tolerance, contributing to maintain homeostasis by preventing autoimmunity or immunopathology that would result from uncontrolled and overreacting immune responses. Tryptophan shortage inhibits T lymphocytes division and accumulation of tryptophan catabolites induces T-cell apoptosis and differentiation of regulatory T-cells. Acts as a suppressor of anti-tumor immunity. Limits the growth of intracellular pathogens by depriving tryptophan. Protects the fetus from maternal immune rejection. This Homo sapiens (Human) protein is Indoleamine 2,3-dioxygenase 1.